We begin with the raw amino-acid sequence, 131 residues long: Small ribosomal subunit protein uS8 (131 aa).

It belongs to the universal ribosomal protein uS8 family. As to quaternary structure, part of the 30S ribosomal subunit. Contacts proteins S5 and S12.

In terms of biological role, one of the primary rRNA binding proteins, it binds directly to 16S rRNA central domain where it helps coordinate assembly of the platform of the 30S subunit. The polypeptide is Small ribosomal subunit protein uS8 (Acholeplasma laidlawii (strain PG-8A)).